We begin with the raw amino-acid sequence, 177 residues long: Platelet glycoprotein IX (177 aa).

An N-terminal signal peptide occupies residues 1 to 16 (MPAWGALFLLWATAEA). Positions 17 to 51 (TKDCPSPCTCRALETMGLWVDCRGHGLTALPALPA) constitute an LRRNT domain. Residues 17–147 (TKDCPSPCTC…QLQASWVRPG (131 aa)) are Extracellular-facing. An N-linked (GlcNAc...) asparagine glycan is attached at N60. The LRR repeat unit spans residues 60-83 (NNSLQSVPPGAFDHLPQLQTLDVT). In terms of domain architecture, LRRCT spans 85–137 (NPWHCDCSLTYLRLWLEDRTPEALLQVRCASPSLAAHGPLGRLTGYQLGSCGW). The chain crosses the membrane as a helical span at residues 148–168 (VLWDVALVAVAALGLALLAGL). The Cytoplasmic segment spans residues 169–177 (LCATTEALD).

In terms of assembly, two GP-Ib beta are disulfide-linked to one GP-Ib alpha. GP-IX is complexed with the GP-Ib heterodimer via a non covalent linkage.

It localises to the membrane. The GPIb-V-IX complex functions as the vWF receptor and mediates vWF-dependent platelet adhesion to blood vessels. The adhesion of platelets to injured vascular surfaces in the arterial circulation is a critical initiating event in hemostasis. GP-IX may provide for membrane insertion and orientation of GP-Ib. This is Platelet glycoprotein IX (GP9) from Homo sapiens (Human).